Here is a 205-residue protein sequence, read N- to C-terminus: ESCRT-related protein CHMP1 (205 aa).

2 coiled-coil regions span residues 13 to 51 and 109 to 140; these read DLKF…MDGA and GNLQ…GAMA.

The protein belongs to the SNF7 family.

It is found in the cytoplasm. The protein resides in the endosome membrane. Functionally, involved in ESCRT-dependent multivesicular body (MVB) formation and sorting of endosomal cargo proteins into MVBs. In Oryza sativa subsp. japonica (Rice), this protein is ESCRT-related protein CHMP1.